A 246-amino-acid chain; its full sequence is MDLSQARAALKAARRVAVLTGAGISAESGIPTFRDAQTGHWARFRPEDLASPDAYRRDPDLVWEWYAGRYRDVLAAQPNRGHELLAELERRKGPGFFLATQNVDGLHARAGSGSAGGELVELHGNLLQARDELTGEVFPLAAPDELTLPPLSPNGQRMRPHIVWFGEYLPVDALDAAQRAFAGAEVALVIGTSSVVYPAAGLAAETLRRGGAVIEINPEATDLTPDATFSLRESASRGLELLLEDD.

A Deacetylase sirtuin-type domain is found at M1–D246. Residue G21 to W41 participates in NAD(+) binding. The substrate site is built by Y66 and R69. Q101–D104 provides a ligand contact to NAD(+). H123 (proton acceptor) is an active-site residue. Residues G191–S193, N217–E219, and A235 each bind NAD(+).

It belongs to the sirtuin family. Class III subfamily.

The protein resides in the cytoplasm. The catalysed reaction is N(6)-acetyl-L-lysyl-[protein] + NAD(+) + H2O = 2''-O-acetyl-ADP-D-ribose + nicotinamide + L-lysyl-[protein]. It carries out the reaction N(6)-succinyl-L-lysyl-[protein] + NAD(+) + H2O = 2''-O-succinyl-ADP-D-ribose + nicotinamide + L-lysyl-[protein]. In terms of biological role, NAD-dependent lysine deacetylase and desuccinylase that specifically removes acetyl and succinyl groups on target proteins. Modulates the activities of several proteins which are inactive in their acylated form. The chain is NAD-dependent protein deacylase from Deinococcus radiodurans (strain ATCC 13939 / DSM 20539 / JCM 16871 / CCUG 27074 / LMG 4051 / NBRC 15346 / NCIMB 9279 / VKM B-1422 / R1).